A 292-amino-acid polypeptide reads, in one-letter code: Elongation factor Ts (292 aa).

Residues 79–82 are involved in Mg(2+) ion dislocation from EF-Tu; the sequence is TDFV.

Belongs to the EF-Ts family.

It is found in the cytoplasm. Associates with the EF-Tu.GDP complex and induces the exchange of GDP to GTP. It remains bound to the aminoacyl-tRNA.EF-Tu.GTP complex up to the GTP hydrolysis stage on the ribosome. The chain is Elongation factor Ts from Xylella fastidiosa (strain Temecula1 / ATCC 700964).